Here is a 178-residue protein sequence, read N- to C-terminus: Cytochrome b6-f complex iron-sulfur subunit (178 aa).

Residues 20-42 (LLTFGSVTGVALGSLYPVVKYFI) traverse the membrane as a helical segment. Positions 68–161 (WLANHSDGDR…IAVENDNVFV (94 aa)) constitute a Rieske domain. Residues Cys-107, His-109, Cys-125, and His-128 each coordinate [2Fe-2S] cluster. Cys-112 and Cys-127 are disulfide-bonded.

Belongs to the Rieske iron-sulfur protein family. In terms of assembly, the 4 large subunits of the cytochrome b6-f complex are cytochrome b6, subunit IV (17 kDa polypeptide, PetD), cytochrome f and the Rieske protein, while the 4 small subunits are PetG, PetL, PetM and PetN. The complex functions as a dimer. It depends on [2Fe-2S] cluster as a cofactor.

Its subcellular location is the cellular thylakoid membrane. The enzyme catalyses 2 oxidized [plastocyanin] + a plastoquinol + 2 H(+)(in) = 2 reduced [plastocyanin] + a plastoquinone + 4 H(+)(out). Its function is as follows. Component of the cytochrome b6-f complex, which mediates electron transfer between photosystem II (PSII) and photosystem I (PSI), cyclic electron flow around PSI, and state transitions. This is Cytochrome b6-f complex iron-sulfur subunit from Prochlorococcus marinus (strain MIT 9303).